A 100-amino-acid polypeptide reads, in one-letter code: Urease subunit gamma (100 aa).

Belongs to the urease gamma subunit family. In terms of assembly, heterotrimer of UreA (gamma), UreB (beta) and UreC (alpha) subunits. Three heterotrimers associate to form the active enzyme.

It is found in the cytoplasm. The enzyme catalyses urea + 2 H2O + H(+) = hydrogencarbonate + 2 NH4(+). Its pathway is nitrogen metabolism; urea degradation; CO(2) and NH(3) from urea (urease route): step 1/1. In Prochlorococcus marinus subsp. pastoris (strain CCMP1986 / NIES-2087 / MED4), this protein is Urease subunit gamma.